A 434-amino-acid polypeptide reads, in one-letter code: Histidinol dehydrogenase (434 aa).

Residues Tyr130, Gln188, and Asn211 each coordinate NAD(+). Ser237, Gln259, and His262 together coordinate substrate. Residues Gln259 and His262 each coordinate Zn(2+). Catalysis depends on proton acceptor residues Glu326 and His327. Substrate contacts are provided by His327, Asp360, Glu414, and His419. Asp360 contacts Zn(2+). His419 provides a ligand contact to Zn(2+).

It belongs to the histidinol dehydrogenase family. In terms of assembly, homodimer. It depends on Zn(2+) as a cofactor.

The enzyme catalyses L-histidinol + 2 NAD(+) + H2O = L-histidine + 2 NADH + 3 H(+). The protein operates within amino-acid biosynthesis; L-histidine biosynthesis; L-histidine from 5-phospho-alpha-D-ribose 1-diphosphate: step 9/9. Catalyzes the sequential NAD-dependent oxidations of L-histidinol to L-histidinaldehyde and then to L-histidine. The chain is Histidinol dehydrogenase from Shigella dysenteriae serotype 1 (strain Sd197).